The primary structure comprises 910 residues: Anoctamin-6 (910 aa).

Residues 1-300 (MKKMSRNVLL…YGEKIGIYFA (300 aa)) are Cytoplasmic-facing. The helical transmembrane segment at 301–321 (WLGYYTQMLLLAAVVGVACFL) threads the bilayer. At 322–375 (YGYLNQDNCTWSKEVCHPDIGGKIIMCPQCDRLCPFWKLNITCESSKKLCIFDS) the chain is on the extracellular side. Residue asparagine 329 is glycosylated (N-linked (GlcNAc...) asparagine). Cystine bridges form between cysteine 330–cysteine 371, cysteine 337–cysteine 364, cysteine 348–cysteine 806, cysteine 351–cysteine 355, and cysteine 595–cysteine 600. Asparagine 361 carries an N-linked (GlcNAc...) asparagine glycan. Residues 376–396 (FGTLVFAVFMGVWVTLFLEFW) form a helical membrane-spanning segment. Over 397–455 (KRRQAELEYEWDTVELQQEEQARPEYEARCTHVVINEITQEEERIPFTAWGKCIRITLC) the chain is Cytoplasmic. A helical transmembrane segment spans residues 456–476 (ASAVFFWILLIIASVIGIIVY). Topologically, residues 477–509 (RLSVFIVFSAKLPKNINGTDPIQKYLTPQTATS) are extracellular. Asparagine 493 is a glycosylation site (N-linked (GlcNAc...) asparagine). The helical transmembrane segment at 510-530 (ITASIISFIIIMILNTIYEKV) threads the bilayer. The Cytoplasmic portion of the chain corresponds to 531 to 551 (AIMITNFELPRTQTDYENSLT). A helical membrane pass occupies residues 552–572 (MKMFLFQFVNYYSSCFYIAFF). Residues 573–601 (KGKFVGYPGDPVYWLGKYRNEECDPGGCL) lie on the Extracellular side of the membrane. A helical membrane pass occupies residues 602 to 621 (LELTTQLTIIMGGKAIWNNI). Residues 622-663 (QEVLLPWIMNLIGRFHRVSGSEKITPRWEQDYHLQPMGKLGL) are Cytoplasmic-facing. The Ca(2+) site is built by glutamate 623, glutamate 666, and glutamate 669. A run of 2 helical transmembrane segments spans residues 664 to 684 (FYEY…VASF) and 685 to 705 (PLAP…DAWK). Topologically, residues 706–722 (LTTQFRRLVPEKAQDIG) are cytoplasmic. Residues 723-743 (AWQPIMQGIAILAVVTNAMII) traverse the membrane as a helical segment. At 744-836 (AFTSDMIPRL…YWHVIAAKLA (93 aa)) the chain is on the extracellular side. N-linked (GlcNAc...) asparagine glycans are attached at residues asparagine 777, asparagine 790, and asparagine 802. The helical transmembrane segment at 837–857 (FIIVMEHVIYSVKFFISYAIP) threads the bilayer. The Cytoplasmic portion of the chain corresponds to 858 to 910 (DVSKRTKSKIQREKYLTQKLLHENHLKDMTKNMGVIAERMIEAVDNNLRPKSE).

Belongs to the anoctamin family. In terms of assembly, homodimer. In terms of tissue distribution, expressed in embryonic stem cell, fetal liver, retina, chronic myologenous leukemia and intestinal cancer.

Its subcellular location is the cell membrane. The enzyme catalyses a 1,2-diacyl-sn-glycero-3-phospho-L-serine(in) = a 1,2-diacyl-sn-glycero-3-phospho-L-serine(out). It carries out the reaction a beta-D-galactosyl-(1&lt;-&gt;1')-N-acylsphing-4-enine(out) = a beta-D-galactosyl-(1&lt;-&gt;1')-N-acylsphing-4-enine(in). The catalysed reaction is a 1,2-diacyl-sn-glycero-3-phosphocholine(in) = a 1,2-diacyl-sn-glycero-3-phosphocholine(out). Exhibits synergistic gating by Ca(2+) and voltage. Inhibited by some non-specific cation channel blockers such as: ruthenium red, 2-aminoethyl diphenylborinate (2APB), gadolinium and cadmium ions. Its activity is regulated as follows. (Microbial infection) Activated by SARS coronavirus-2/SARS-CoV-2 spike protein. Functionally, small-conductance calcium-activated nonselective cation (SCAN) channel which acts as a regulator of phospholipid scrambling in platelets and osteoblasts. Phospholipid scrambling results in surface exposure of phosphatidylserine which in platelets is essential to trigger the clotting system whereas in osteoblasts is essential for the deposition of hydroxyapatite during bone mineralization. Has calcium-dependent phospholipid scramblase activity; scrambles phosphatidylserine, phosphatidylcholine and galactosylceramide. Can generate outwardly rectifying chloride channel currents in airway epithelial cells and Jurkat T lymphocytes. (Microbial infection) Upon SARS coronavirus-2/SARS-CoV-2 infection, is activated by spike protein which increases the amplitude of spontaneous Ca(2+) signals and is required for spike-mediated syncytia. The protein is Anoctamin-6 of Homo sapiens (Human).